A 482-amino-acid polypeptide reads, in one-letter code: Probable glycine dehydrogenase (decarboxylating) subunit 2 (482 aa).

An N6-(pyridoxal phosphate)lysine modification is found at Lys269.

This sequence belongs to the GcvP family. C-terminal subunit subfamily. As to quaternary structure, the glycine cleavage system is composed of four proteins: P, T, L and H. In this organism, the P 'protein' is a heterodimer of two subunits. Pyridoxal 5'-phosphate serves as cofactor.

It carries out the reaction N(6)-[(R)-lipoyl]-L-lysyl-[glycine-cleavage complex H protein] + glycine + H(+) = N(6)-[(R)-S(8)-aminomethyldihydrolipoyl]-L-lysyl-[glycine-cleavage complex H protein] + CO2. The glycine cleavage system catalyzes the degradation of glycine. The P protein binds the alpha-amino group of glycine through its pyridoxal phosphate cofactor; CO(2) is released and the remaining methylamine moiety is then transferred to the lipoamide cofactor of the H protein. In Pelodictyon phaeoclathratiforme (strain DSM 5477 / BU-1), this protein is Probable glycine dehydrogenase (decarboxylating) subunit 2.